Consider the following 352-residue polypeptide: Spermidine/putrescine import ATP-binding protein PotA (352 aa).

The 231-residue stretch at 7 to 237 folds into the ABC transporter domain; that stretch reads IRLENVTKSF…PVNAFVADFI (231 aa). 39–46 is an ATP binding site; the sequence is GPSGCGKT.

It belongs to the ABC transporter superfamily. Spermidine/putrescine importer (TC 3.A.1.11.1) family. In terms of assembly, the complex is composed of two ATP-binding proteins (PotA), two transmembrane proteins (PotB and PotC) and a solute-binding protein (PotD).

It localises to the cell membrane. The enzyme catalyses ATP + H2O + polyamine-[polyamine-binding protein]Side 1 = ADP + phosphate + polyamineSide 2 + [polyamine-binding protein]Side 1.. Functionally, part of the ABC transporter complex PotABCD involved in spermidine/putrescine import. Responsible for energy coupling to the transport system. The polypeptide is Spermidine/putrescine import ATP-binding protein PotA (Acetivibrio thermocellus (strain ATCC 27405 / DSM 1237 / JCM 9322 / NBRC 103400 / NCIMB 10682 / NRRL B-4536 / VPI 7372) (Clostridium thermocellum)).